Here is a 254-residue protein sequence, read N- to C-terminus: Low affinity immunoglobulin gamma Fc region receptor III-A (254 aa).

Residues 1–16 (MWQLLLPTALLLLVSA) form the signal peptide. The Extracellular portion of the chain corresponds to 17–208 (GMRTEDLPKA…ISSFFPPGYQ (192 aa)). Ig-like C2-type domains follow at residues 24 to 105 (PKAV…LEVH) and 107 to 189 (GWLL…VNIT). Cys-47 and Cys-89 are oxidised to a cystine. Residues Asn-56, Asn-63, and Asn-92 are each glycosylated (N-linked (GlcNAc...) asparagine). A disulfide bridge connects residues Cys-128 and Cys-172. Asn-180 and Asn-187 each carry an N-linked (GlcNAc...) asparagine glycan. Residues 209–229 (VSFCLVMVLLFAVDTGLYFSV) traverse the membrane as a helical segment. Topologically, residues 230-254 (KTNIRSSTRDWKDHKFKWRKDPQDK) are cytoplasmic. Ser-236 is modified (phosphoserine; by PKC). A Phosphothreonine; by PKC modification is found at Thr-237.

In terms of assembly, forms a heterooligomeric complex with ITAM-containing signaling subunits, either a homodimer of CD247, a homodimer of FCER1G or a heterodimer of CD247 and FCER1G. Interacts (via transmembrane domain) with signaling subunits; this interaction is a prerequisite for receptor complex expression on the cell surface and intracellular signal transduction. Binds the Fc region of antigen-complexed IgG with a preference for IgG1 and IgG3 isotypes. Interacts with CD2; this interaction is involved in NK cell activation and cytotoxicity. Interacts with S100A4; this interaction inhibits PKC-dependent phosphorylation of FCGR3A. Post-translationally, glycosylated. Contains high mannose- and complex-type oligosaccharides. Glycosylation at Asn-180 is mandatory for high affinity binding to the Fc and for discrimination between fucosylated and afucosylated IgG glycoforms. In terms of processing, undergoes rapid ectodomain shedding upon NK cell stimulation. The soluble form is produced by a proteolytic cleavage mediated by ADAM17. Repeated stimulation causes receptor shedding, a mechanism that allows for increased NK cell motility and detachment from opsonized target cells while avoiding activation-induced NK cell apoptosis. Phosphorylated at RSSTR motif by PKC. The relevant physiological PKCs might be PRKCI, PRKCG, PRKCE, PRKCH and PRKCQ. In terms of tissue distribution, expressed in natural killer cells (at protein level). Expressed in a subset of circulating monocytes (at protein level).

The protein resides in the cell membrane. The protein localises to the secreted. Its function is as follows. Receptor for the invariable Fc fragment of immunoglobulin gamma (IgG). Optimally activated upon binding of clustered antigen-IgG complexes displayed on cell surfaces, triggers lysis of antibody-coated cells, a process known as antibody-dependent cellular cytotoxicity (ADCC). Does not bind free monomeric IgG, thus avoiding inappropriate effector cell activation in the absence of antigenic trigger. Mediates IgG effector functions on natural killer (NK) cells. Binds antigen-IgG complexes generated upon infection and triggers NK cell-dependent cytokine production and degranulation to limit viral load and propagation. Involved in the generation of memory-like adaptive NK cells capable to produce high amounts of IFNG and to efficiently eliminate virus-infected cells via ADCC. Regulates NK cell survival and proliferation, in particular by preventing NK cell progenitor apoptosis. Fc-binding subunit that associates with CD247 and/or FCER1G adapters to form functional signaling complexes. Following the engagement of antigen-IgG complexes, triggers phosphorylation of immunoreceptor tyrosine-based activation motif (ITAM)-containing adapters with subsequent activation of phosphatidylinositol 3-kinase signaling and sustained elevation of intracellular calcium that ultimately drive NK cell activation. The ITAM-dependent signaling coupled to receptor phosphorylation by PKC mediates robust intracellular calcium flux that leads to production of pro-inflammatory cytokines, whereas in the absence of receptor phosphorylation it mainly activates phosphatidylinositol 3-kinase signaling leading to cell degranulation. Costimulates NK cells and trigger lysis of target cells independently of IgG binding. Mediates the antitumor activities of therapeutic antibodies. Upon ligation on monocytes triggers TNFA-dependent ADCC of IgG-coated tumor cells. Mediates enhanced ADCC in response to afucosylated IgGs. In terms of biological role, (Microbial infection) Involved in Dengue virus pathogenesis via antibody-dependent enhancement (ADE) mechanism. Secondary infection with Dengue virus triggers elevated levels of afucosylated non-neutralizing IgG1s with reactivity to viral envelope/E protein. Viral antigen-IgG1 complexes bind with high affinity to FCGR3A, facilitating virus entry in myeloid cells and subsequent viral replication. The sequence is that of Low affinity immunoglobulin gamma Fc region receptor III-A from Homo sapiens (Human).